The primary structure comprises 106 residues: MSDLISYDDVIDAAYDIFLEMAPDNLEPADVILFTAQFEDRGAAELVETGEDWVEHVGFEVDKEVYAEVRIGLVNEENDVLDDVFARMLISRDPEHKFCHMLWKRD.

It belongs to the putative dsDNA mimic protein family.

Its function is as follows. May act as a double-stranded DNA (dsDNA) mimic. Probably regulates the activity of a dsDNA-binding protein. The polypeptide is Putative double-stranded DNA mimic protein VP1949 (Vibrio parahaemolyticus serotype O3:K6 (strain RIMD 2210633)).